We begin with the raw amino-acid sequence, 391 residues long: Succinate--CoA ligase [ADP-forming] subunit beta (391 aa).

An ATP-grasp domain is found at 9–246; it reads KHLFADYDIP…ITQEDEAEVQ (238 aa). ATP is bound by residues lysine 46, 53–55, glutamate 99, leucine 102, and glutamate 107; that span reads GRG. Mg(2+) contacts are provided by asparagine 199 and aspartate 213. Substrate contacts are provided by residues asparagine 266 and 323–325; that span reads GIV.

It belongs to the succinate/malate CoA ligase beta subunit family. As to quaternary structure, heterotetramer of two alpha and two beta subunits. Mg(2+) is required as a cofactor.

It carries out the reaction succinate + ATP + CoA = succinyl-CoA + ADP + phosphate. The catalysed reaction is GTP + succinate + CoA = succinyl-CoA + GDP + phosphate. The protein operates within carbohydrate metabolism; tricarboxylic acid cycle; succinate from succinyl-CoA (ligase route): step 1/1. Functionally, succinyl-CoA synthetase functions in the citric acid cycle (TCA), coupling the hydrolysis of succinyl-CoA to the synthesis of either ATP or GTP and thus represents the only step of substrate-level phosphorylation in the TCA. The beta subunit provides nucleotide specificity of the enzyme and binds the substrate succinate, while the binding sites for coenzyme A and phosphate are found in the alpha subunit. The sequence is that of Succinate--CoA ligase [ADP-forming] subunit beta from Alkalilimnicola ehrlichii (strain ATCC BAA-1101 / DSM 17681 / MLHE-1).